We begin with the raw amino-acid sequence, 157 residues long: S-ribosylhomocysteine lyase (157 aa).

Positions 54, 58, and 126 each coordinate Fe cation.

This sequence belongs to the LuxS family. As to quaternary structure, homodimer. Fe cation is required as a cofactor.

The catalysed reaction is S-(5-deoxy-D-ribos-5-yl)-L-homocysteine = (S)-4,5-dihydroxypentane-2,3-dione + L-homocysteine. In terms of biological role, involved in the synthesis of autoinducer 2 (AI-2) which is secreted by bacteria and is used to communicate both the cell density and the metabolic potential of the environment. The regulation of gene expression in response to changes in cell density is called quorum sensing. Catalyzes the transformation of S-ribosylhomocysteine (RHC) to homocysteine (HC) and 4,5-dihydroxy-2,3-pentadione (DPD). The protein is S-ribosylhomocysteine lyase of Bacillus velezensis (strain DSM 23117 / BGSC 10A6 / LMG 26770 / FZB42) (Bacillus amyloliquefaciens subsp. plantarum).